The sequence spans 1710 residues: Protein NETWORKED 1B (1710 aa).

The region spanning 13–92 (YSWWWDSHIP…ERYDHTTVEL (80 aa)) is the NAB domain. The disordered stretch occupies residues 113-159 (EDSASSSSEPRTEADTEALQKDGTKSKRSFSQMNKLDGTSDSHEADS). Basic and acidic residues-rich tracts occupy residues 122 to 137 (PRTE…DGTK) and 150 to 159 (GTSDSHEADS). Coiled coils occupy residues 152–446 (SDSH…ELGA), 474–546 (QMLR…EIHC), 579–883 (VKKL…IDSL), 974–1021 (HQCG…FESL), 1095–1259 (VSSL…LQEK), and 1285–1336 (LILE…LSAY). Positions 1409–1448 (RLSRQITRSTSQKRRDRRKIENIQPDDQVTGESRQPRLRP) are disordered. Residues 1559 to 1665 (RRLSSLRISL…VLKLEDGTKS (107 aa)) are a coiled coil.

Belongs to the NET family. In terms of tissue distribution, expressed in root meristems and at very low levels throughout mature vasculature.

Plant-specific actin binding protein. May be part of a membrane-cytoskeletal adapter complex. This chain is Protein NETWORKED 1B, found in Arabidopsis thaliana (Mouse-ear cress).